Consider the following 227-residue polypeptide: Charged multivesicular body protein 4b (227 aa).

2 disordered regions span residues 1-26 (MSGI…SPQE) and 186-227 (SGPE…AGNM). Residues 9–20 (FGAGAGGKGAGK) are compositionally biased toward gly residues. Residues 25–185 (QEAIQRLRDT…EELDKNLLEI (161 aa)) adopt a coiled-coil conformation.

This sequence belongs to the SNF7 family. As to quaternary structure, probable core component of the endosomal sorting required for transport complex III (ESCRT-III). ESCRT-III components are thought to multimerize to form a flat lattice on the perimeter membrane of the endosome.

It is found in the cytoplasm. Its subcellular location is the cytosol. It localises to the late endosome membrane. The protein resides in the midbody. Its function is as follows. Probable core component of the endosomal sorting required for transport complex III (ESCRT-III) which is involved in multivesicular bodies (MVBs) formation and sorting of endosomal cargo proteins into MVBs. MVBs contain intraluminal vesicles (ILVs) that are generated by invagination and scission from the limiting membrane of the endosome and mostly are delivered to lysosomes enabling degradation of membrane proteins, such as stimulated growth factor receptors, lysosomal enzymes and lipids. This Gallus gallus (Chicken) protein is Charged multivesicular body protein 4b (CHMP4B).